Reading from the N-terminus, the 121-residue chain is Non-structural protein 8 (121 aa).

An N-terminal signal peptide occupies residues 1–15; it reads MKLLIVFGLLASVYC. One can recognise an SARS ORF8 Ig-like domain in the interval 19-121; sequence ECSIQECCEN…HDVRVVLDFI (103 aa). 3 cysteine pairs are disulfide-bonded: Cys25–Cys90, Cys37–Cys102, and Cys61–Cys83.

The protein is Non-structural protein 8 of Bat coronavirus HKU3 (BtCoV).